The primary structure comprises 347 residues: Holliday junction branch migration complex subunit RuvB (347 aa).

Residues 1–185 (MSDDPTTPEL…FGFTAHLEFY (185 aa)) are large ATPase domain (RuvB-L). Residues Leu-24, Arg-25, Gly-66, Lys-69, Thr-70, Thr-71, 132 to 134 (EDF), Arg-175, Tyr-185, and Arg-222 contribute to the ATP site. Position 70 (Thr-70) interacts with Mg(2+). Positions 186–255 (DEGELAQVLA…AVHAALELYD (70 aa)) are small ATPAse domain (RuvB-S). The tract at residues 258–347 (ELGLDRLDRA…SQPPSLMDDL (90 aa)) is head domain (RuvB-H). Residues Arg-313 and Arg-318 each coordinate DNA.

It belongs to the RuvB family. In terms of assembly, homohexamer. Forms an RuvA(8)-RuvB(12)-Holliday junction (HJ) complex. HJ DNA is sandwiched between 2 RuvA tetramers; dsDNA enters through RuvA and exits via RuvB. An RuvB hexamer assembles on each DNA strand where it exits the tetramer. Each RuvB hexamer is contacted by two RuvA subunits (via domain III) on 2 adjacent RuvB subunits; this complex drives branch migration. In the full resolvosome a probable DNA-RuvA(4)-RuvB(12)-RuvC(2) complex forms which resolves the HJ.

The protein localises to the cytoplasm. It carries out the reaction ATP + H2O = ADP + phosphate + H(+). Its function is as follows. The RuvA-RuvB-RuvC complex processes Holliday junction (HJ) DNA during genetic recombination and DNA repair, while the RuvA-RuvB complex plays an important role in the rescue of blocked DNA replication forks via replication fork reversal (RFR). RuvA specifically binds to HJ cruciform DNA, conferring on it an open structure. The RuvB hexamer acts as an ATP-dependent pump, pulling dsDNA into and through the RuvAB complex. RuvB forms 2 homohexamers on either side of HJ DNA bound by 1 or 2 RuvA tetramers; 4 subunits per hexamer contact DNA at a time. Coordinated motions by a converter formed by DNA-disengaged RuvB subunits stimulates ATP hydrolysis and nucleotide exchange. Immobilization of the converter enables RuvB to convert the ATP-contained energy into a lever motion, pulling 2 nucleotides of DNA out of the RuvA tetramer per ATP hydrolyzed, thus driving DNA branch migration. The RuvB motors rotate together with the DNA substrate, which together with the progressing nucleotide cycle form the mechanistic basis for DNA recombination by continuous HJ branch migration. Branch migration allows RuvC to scan DNA until it finds its consensus sequence, where it cleaves and resolves cruciform DNA. The sequence is that of Holliday junction branch migration complex subunit RuvB from Leifsonia xyli subsp. xyli (strain CTCB07).